A 1015-amino-acid polypeptide reads, in one-letter code: Condensin complex subunit 3 (1015 aa).

HEAT repeat units lie at residues 94–131 (GLLN…SMPE), 138–173 (DVFD…QDPK), 174–212 (DDEC…TLPK), 238–275 (MRAM…GWLR), and 276–313 (FSEG…LSEL). Ser-390 is subject to Phosphoserine. HEAT repeat units follow at residues 399–436 (EFIG…LPTI), 439–478 (SLVS…TVGV), and 617–654 (DFAR…TFGI). Position 674 is a phosphoserine (Ser-674). HEAT repeat units lie at residues 687 to 724 (ATAK…SGLL) and 865 to 907 (KDLL…QAEA). A Phosphothreonine modification is found at Thr-931. The segment covering 941-950 (ASKSTQLKTN) has biased composition (polar residues). The tract at residues 941 to 994 (ASKSTQLKTNRGQRKVTVSARTNRRCQTAEADSESDHEVPEPESEMKMRLPRRA) is disordered. Ser-973, Ser-975, Ser-1002, and Ser-1015 each carry phosphoserine. The segment covering 974–988 (ESDHEVPEPESEMKM) has biased composition (basic and acidic residues).

The protein belongs to the CND3 (condensin subunit 3) family. In terms of assembly, component of the condensin complex, which contains the SMC2 and SMC4 heterodimer, and three non SMC subunits that probably regulate the complex: NCAPH/BRRN1, NCAPD2/CAPD2 and NCAPG. Post-translationally, phosphorylated by CDK1. Its phosphorylation, as well as that of NCAPD2 and NCAPH subunits, activates the condensin complex and is required for chromosome condensation. In terms of tissue distribution, highly expressed in testis.

It localises to the nucleus. The protein resides in the cytoplasm. The protein localises to the chromosome. Its function is as follows. Regulatory subunit of the condensin complex, a complex required for conversion of interphase chromatin into mitotic-like condense chromosomes. The condensin complex probably introduces positive supercoils into relaxed DNA in the presence of type I topoisomerases and converts nicked DNA into positive knotted forms in the presence of type II topoisomerases. In Homo sapiens (Human), this protein is Condensin complex subunit 3 (NCAPG).